Here is a 324-residue protein sequence, read N- to C-terminus: 2,3,4,5-tetrahydropyridine-2,6-dicarboxylate N-succinyltransferase (324 aa).

Residues Asp173 and Glu190 each contribute to the Mg(2+) site. Catalysis depends on Glu206, which acts as the Acyl-anhydride intermediate. Succinyl-CoA is bound by residues Arg208, Gly223, Ser226, Ala249, 264 to 265 (EA), Gly272, Lys284, and 297 to 300 (RRNS).

It belongs to the type 2 tetrahydrodipicolinate N-succinyltransferase family. In terms of assembly, homotrimer.

The protein resides in the cytoplasm. It carries out the reaction (S)-2,3,4,5-tetrahydrodipicolinate + succinyl-CoA + H2O = (S)-2-succinylamino-6-oxoheptanedioate + CoA. It participates in amino-acid biosynthesis; L-lysine biosynthesis via DAP pathway; LL-2,6-diaminopimelate from (S)-tetrahydrodipicolinate (succinylase route): step 1/3. Catalyzes the conversion of the cyclic tetrahydrodipicolinate (THDP) into the acyclic N-succinyl-L-2-amino-6-oxopimelate using succinyl-CoA. The polypeptide is 2,3,4,5-tetrahydropyridine-2,6-dicarboxylate N-succinyltransferase (Geodermatophilus obscurus (strain ATCC 25078 / DSM 43160 / JCM 3152 / CCUG 61914 / KCC A-0152 / KCTC 9177 / NBRC 13315 / NRRL B-3577 / G-20)).